Here is a 733-residue protein sequence, read N- to C-terminus: Phosphoribosylformylglycinamidine synthase subunit PurL (733 aa).

Histidine 41 is an active-site residue. The ATP site is built by tyrosine 44 and lysine 83. Mg(2+) is bound at residue glutamate 85. Substrate is bound by residues 86-89 (SHNH) and arginine 108. Residue histidine 87 is the Proton acceptor of the active site. Aspartate 109 lines the Mg(2+) pocket. A disordered region spans residues 212 to 232 (GASFASQELSEESEEKRPSVQ). Glutamine 232 is a binding site for substrate. Aspartate 260 lines the Mg(2+) pocket. 304 to 306 (ESQ) is a substrate binding site. Residues aspartate 488 and glycine 525 each contribute to the ATP site. Position 526 (asparagine 526) interacts with Mg(2+). A substrate-binding site is contributed by serine 528.

It belongs to the FGAMS family. In terms of assembly, monomer. Part of the FGAM synthase complex composed of 1 PurL, 1 PurQ and 2 PurS subunits.

The protein resides in the cytoplasm. It carries out the reaction N(2)-formyl-N(1)-(5-phospho-beta-D-ribosyl)glycinamide + L-glutamine + ATP + H2O = 2-formamido-N(1)-(5-O-phospho-beta-D-ribosyl)acetamidine + L-glutamate + ADP + phosphate + H(+). Its pathway is purine metabolism; IMP biosynthesis via de novo pathway; 5-amino-1-(5-phospho-D-ribosyl)imidazole from N(2)-formyl-N(1)-(5-phospho-D-ribosyl)glycinamide: step 1/2. Functionally, part of the phosphoribosylformylglycinamidine synthase complex involved in the purines biosynthetic pathway. Catalyzes the ATP-dependent conversion of formylglycinamide ribonucleotide (FGAR) and glutamine to yield formylglycinamidine ribonucleotide (FGAM) and glutamate. The FGAM synthase complex is composed of three subunits. PurQ produces an ammonia molecule by converting glutamine to glutamate. PurL transfers the ammonia molecule to FGAR to form FGAM in an ATP-dependent manner. PurS interacts with PurQ and PurL and is thought to assist in the transfer of the ammonia molecule from PurQ to PurL. This is Phosphoribosylformylglycinamidine synthase subunit PurL from Caldanaerobacter subterraneus subsp. tengcongensis (strain DSM 15242 / JCM 11007 / NBRC 100824 / MB4) (Thermoanaerobacter tengcongensis).